A 248-amino-acid polypeptide reads, in one-letter code: GPN-loop GTPase PAB0955 (248 aa).

Position 10–15 (10–15) interacts with GTP; the sequence is GSGKTT. The Gly-Pro-Asn (GPN)-loop; involved in dimer interface signature appears at 65–67; it reads GPN. Residues 165-168 and Ala-224 contribute to the GTP site; that span reads NKVD.

It belongs to the GPN-loop GTPase family. Homodimer. Interacts with DNA topoisomerase VI subunit B (top6B), DNA primase DnaG and RF-C.

Functionally, small GTPase that may be involved in genome maintenance. Has weak intrinsic GTPase activity but displays no ATPase activity. The sequence is that of GPN-loop GTPase PAB0955 from Pyrococcus abyssi (strain GE5 / Orsay).